Consider the following 105-residue polypeptide: Small ribosomal subunit protein uS14m (105 aa).

This sequence belongs to the universal ribosomal protein uS14 family. As to quaternary structure, component of the mitochondrial small ribosomal subunit (mt-SSU). Mature yeast 74S mitochondrial ribosomes consist of a small (37S) and a large (54S) subunit. The 37S small subunit contains a 15S ribosomal RNA (15S mt-rRNA) and at least 32 different proteins. The 54S large subunit contains a 21S rRNA (21S mt-rRNA) and at least 45 different proteins.

Its subcellular location is the mitochondrion. In terms of biological role, component of the mitochondrial ribosome (mitoribosome), a dedicated translation machinery responsible for the synthesis of mitochondrial genome-encoded proteins, including at least some of the essential transmembrane subunits of the mitochondrial respiratory chain. The mitoribosomes are attached to the mitochondrial inner membrane and translation products are cotranslationally integrated into the membrane. In Schizosaccharomyces pombe (strain 972 / ATCC 24843) (Fission yeast), this protein is Small ribosomal subunit protein uS14m (mrp2).